Consider the following 121-residue polypeptide: Large ribosomal subunit protein bL19 (121 aa).

The protein belongs to the bacterial ribosomal protein bL19 family.

In terms of biological role, this protein is located at the 30S-50S ribosomal subunit interface and may play a role in the structure and function of the aminoacyl-tRNA binding site. This is Large ribosomal subunit protein bL19 (rplS) from Borreliella burgdorferi (strain ATCC 35210 / DSM 4680 / CIP 102532 / B31) (Borrelia burgdorferi).